The following is a 540-amino-acid chain: Ipecac alkaloid beta-glucosidase 9 (540 aa).

A beta-D-glucoside-binding positions include Gln-36, His-140, 185–186, Tyr-350, Glu-421, Trp-470, and Phe-486; that span reads NE. The active-site Proton donor is the Glu-186. Residue Glu-421 is the Nucleophile of the active site.

This sequence belongs to the glycosyl hydrolase 1 family.

The protein localises to the cytoplasm. It is found in the cytosol. It catalyses the reaction deacetylipecoside + H2O = deacetylipecoside aglycone + D-glucose. It carries out the reaction deacetylisoipecoside + H2O = deacetylisoipecoside aglycone + D-glucose. Its pathway is alkaloid biosynthesis. Beta-glucosidase catalyzing deglucosylation on N-deacetylisoipecoside and N-deacetylipecoside. The protein is Ipecac alkaloid beta-glucosidase 9 of Carapichea ipecacuanha (Ipecac).